Here is a 191-residue protein sequence, read N- to C-terminus: Dephospho-CoA kinase (191 aa).

The 189-residue stretch at 3–191 (AIGITGSYAS…KLILVIARKL (189 aa)) folds into the DPCK domain. Residue 11–16 (ASGKTF) coordinates ATP.

This sequence belongs to the CoaE family.

The protein resides in the cytoplasm. It catalyses the reaction 3'-dephospho-CoA + ATP = ADP + CoA + H(+). It functions in the pathway cofactor biosynthesis; coenzyme A biosynthesis; CoA from (R)-pantothenate: step 5/5. In terms of biological role, catalyzes the phosphorylation of the 3'-hydroxyl group of dephosphocoenzyme A to form coenzyme A. The protein is Dephospho-CoA kinase of Rickettsia felis (strain ATCC VR-1525 / URRWXCal2) (Rickettsia azadi).